The sequence spans 210 residues: 7-carboxy-7-deazaguanine synthase (210 aa).

Substrate is bound by residues 12–14 (LQG) and Arg27. Residues 18–210 (HAGRASVFCR…VQTHKSLGIR (193 aa)) form the Radical SAM core domain. The [4Fe-4S] cluster site is built by Cys31, Cys46, and Cys49. Mg(2+) is bound at residue Thr51. Residue Thr90 participates in substrate binding. S-adenosyl-L-methionine-binding positions include Gly92, 133-135 (SPK), and 173-176 (QPMD).

The protein belongs to the radical SAM superfamily. 7-carboxy-7-deazaguanine synthase family. In terms of assembly, homodimer. The cofactor is [4Fe-4S] cluster. S-adenosyl-L-methionine is required as a cofactor. It depends on Mg(2+) as a cofactor.

It carries out the reaction 6-carboxy-5,6,7,8-tetrahydropterin + H(+) = 7-carboxy-7-deazaguanine + NH4(+). It functions in the pathway purine metabolism; 7-cyano-7-deazaguanine biosynthesis. In terms of biological role, catalyzes the complex heterocyclic radical-mediated conversion of 6-carboxy-5,6,7,8-tetrahydropterin (CPH4) to 7-carboxy-7-deazaguanine (CDG), a step common to the biosynthetic pathways of all 7-deazapurine-containing compounds. In Bradyrhizobium diazoefficiens (strain JCM 10833 / BCRC 13528 / IAM 13628 / NBRC 14792 / USDA 110), this protein is 7-carboxy-7-deazaguanine synthase.